Consider the following 477-residue polypeptide: Cobyric acid synthase (477 aa).

The GATase cobBQ-type domain occupies 248–432; sequence GLHIACPMLS…LHGLFSGDGF (185 aa). Cys-330 serves as the catalytic Nucleophile. Residue His-424 is part of the active site.

The protein belongs to the CobB/CobQ family. CobQ subfamily.

It participates in cofactor biosynthesis; adenosylcobalamin biosynthesis. Functionally, catalyzes amidations at positions B, D, E, and G on adenosylcobyrinic A,C-diamide. NH(2) groups are provided by glutamine, and one molecule of ATP is hydrogenolyzed for each amidation. In Paracoccus denitrificans (strain Pd 1222), this protein is Cobyric acid synthase.